Consider the following 173-residue polypeptide: Translation initiation factor IF-3 (173 aa).

Belongs to the IF-3 family. As to quaternary structure, monomer.

It is found in the cytoplasm. Its function is as follows. IF-3 binds to the 30S ribosomal subunit and shifts the equilibrium between 70S ribosomes and their 50S and 30S subunits in favor of the free subunits, thus enhancing the availability of 30S subunits on which protein synthesis initiation begins. The protein is Translation initiation factor IF-3 of Bacillus subtilis (strain 168).